Reading from the N-terminus, the 29-residue chain is Cyclotide cter-L (29 aa).

The segment at residues 1–29 is a cross-link (cyclopeptide (His-Asp)); that stretch reads HEPCGESCVFIPCITTVVGCSCKNKVCYD. Intrachain disulfides connect cysteine 4-cysteine 20, cysteine 8-cysteine 22, and cysteine 13-cysteine 27.

Contains 3 disulfide bonds. Post-translationally, this is a cyclic peptide.

In terms of biological role, probably participates in a plant defense mechanism. The chain is Cyclotide cter-L from Clitoria ternatea (Butterfly pea).